We begin with the raw amino-acid sequence, 413 residues long: 4-hydroxy-3-methylbut-2-en-1-yl diphosphate synthase (flavodoxin) (413 aa).

[4Fe-4S] cluster contacts are provided by cysteine 305, cysteine 308, cysteine 351, and glutamate 358.

It belongs to the IspG family. Requires [4Fe-4S] cluster as cofactor.

The catalysed reaction is (2E)-4-hydroxy-3-methylbut-2-enyl diphosphate + oxidized [flavodoxin] + H2O + 2 H(+) = 2-C-methyl-D-erythritol 2,4-cyclic diphosphate + reduced [flavodoxin]. It functions in the pathway isoprenoid biosynthesis; isopentenyl diphosphate biosynthesis via DXP pathway; isopentenyl diphosphate from 1-deoxy-D-xylulose 5-phosphate: step 5/6. Its function is as follows. Converts 2C-methyl-D-erythritol 2,4-cyclodiphosphate (ME-2,4cPP) into 1-hydroxy-2-methyl-2-(E)-butenyl 4-diphosphate. This is 4-hydroxy-3-methylbut-2-en-1-yl diphosphate synthase (flavodoxin) from Bartonella tribocorum (strain CIP 105476 / IBS 506).